Reading from the N-terminus, the 223-residue chain is GrpE protein homolog, mitochondrial (223 aa).

The protein belongs to the GrpE family. In terms of assembly, component of the PAM complex, at least composed of mtHsp70, mge1, tim44, pam16, pam17 and pam18.

Its subcellular location is the mitochondrion matrix. Its function is as follows. Essential component of the PAM complex, a complex required for the translocation of transit peptide-containing proteins from the inner membrane into the mitochondrial matrix in an ATP-dependent manner. Seems to control the nucleotide-dependent binding of ssc1 to substrate proteins. This is GrpE protein homolog, mitochondrial (mge1) from Schizosaccharomyces pombe (strain 972 / ATCC 24843) (Fission yeast).